A 245-amino-acid polypeptide reads, in one-letter code: Eukaryotic translation initiation factor 6 (245 aa).

The residue at position 113 (tyrosine 113) is a Phosphotyrosine. At threonine 165 the chain carries Phosphothreonine. Serine 166 carries the post-translational modification Phosphoserine. Serine 174 and serine 175 each carry phosphoserine; by CK1. Residue serine 235 is modified to Phosphoserine; by PKC. Residues serine 239 and serine 243 each carry the phosphoserine modification.

It belongs to the eIF-6 family. In terms of assembly, monomer. Associates with the 60S ribosomal subunit. Interacts with RACK1. Interacts with DICER1, AGO2, TARBP2, MOV10 and RPL7A; they form a large RNA-induced silencing complex (RISC). In terms of processing, phosphorylation at Ser-174 and Ser-175 by CSNK1D/CK1 promotes nuclear export. Post-translationally, ufmylated by UFL1. As to expression, expressed at very high levels in colon carcinoma with lower levels in normal colon and ileum and lowest levels in kidney and muscle (at protein level).

The protein resides in the cytoplasm. It localises to the nucleus. It is found in the nucleolus. Binds to the 60S ribosomal subunit and prevents its association with the 40S ribosomal subunit to form the 80S initiation complex in the cytoplasm. Behaves as a stimulatory translation initiation factor downstream insulin/growth factors. Is also involved in ribosome biogenesis. Associates with pre-60S subunits in the nucleus and is involved in its nuclear export. Cytoplasmic release of TIF6 from 60S subunits and nuclear relocalization is promoted by a RACK1 (RACK1)-dependent protein kinase C activity. In tissues responsive to insulin, controls fatty acid synthesis and glycolysis by exerting translational control of adipogenic transcription factors such as CEBPB, CEBPD and ATF4 that have G/C rich or uORF in their 5'UTR. Required for ROS-dependent megakaryocyte maturation and platelets formation, controls the expression of mitochondrial respiratory chain genes involved in reactive oxygen species (ROS) synthesis. Involved in miRNA-mediated gene silencing by the RNA-induced silencing complex (RISC). Required for both miRNA-mediated translational repression and miRNA-mediated cleavage of complementary mRNAs by RISC. Modulates cell cycle progression and global translation of pre-B cells, its activation seems to be rate-limiting in tumorigenesis and tumor growth. The protein is Eukaryotic translation initiation factor 6 of Homo sapiens (Human).